A 91-amino-acid chain; its full sequence is Small ribosomal subunit protein uS19 (91 aa).

This sequence belongs to the universal ribosomal protein uS19 family.

Protein S19 forms a complex with S13 that binds strongly to the 16S ribosomal RNA. The chain is Small ribosomal subunit protein uS19 from Bordetella bronchiseptica (strain ATCC BAA-588 / NCTC 13252 / RB50) (Alcaligenes bronchisepticus).